A 221-amino-acid polypeptide reads, in one-letter code: UPF0502 protein XOO0224 (221 aa).

It belongs to the UPF0502 family.

This Xanthomonas oryzae pv. oryzae (strain MAFF 311018) protein is UPF0502 protein XOO0224.